The following is a 275-amino-acid chain: tRNA (guanine-N(1)-)-methyltransferase (275 aa).

S-adenosyl-L-methionine-binding positions include Gly-139 and 159–164; that span reads IGDYIL.

This sequence belongs to the RNA methyltransferase TrmD family. As to quaternary structure, homodimer.

It localises to the cytoplasm. It carries out the reaction guanosine(37) in tRNA + S-adenosyl-L-methionine = N(1)-methylguanosine(37) in tRNA + S-adenosyl-L-homocysteine + H(+). Specifically methylates guanosine-37 in various tRNAs. This is tRNA (guanine-N(1)-)-methyltransferase from Lachnoclostridium phytofermentans (strain ATCC 700394 / DSM 18823 / ISDg) (Clostridium phytofermentans).